Reading from the N-terminus, the 569-residue chain is Proline--tRNA ligase (569 aa).

Belongs to the class-II aminoacyl-tRNA synthetase family. ProS type 1 subfamily. As to quaternary structure, homodimer.

The protein localises to the cytoplasm. The enzyme catalyses tRNA(Pro) + L-proline + ATP = L-prolyl-tRNA(Pro) + AMP + diphosphate. Its function is as follows. Catalyzes the attachment of proline to tRNA(Pro) in a two-step reaction: proline is first activated by ATP to form Pro-AMP and then transferred to the acceptor end of tRNA(Pro). As ProRS can inadvertently accommodate and process non-cognate amino acids such as alanine and cysteine, to avoid such errors it has two additional distinct editing activities against alanine. One activity is designated as 'pretransfer' editing and involves the tRNA(Pro)-independent hydrolysis of activated Ala-AMP. The other activity is designated 'posttransfer' editing and involves deacylation of mischarged Ala-tRNA(Pro). The misacylated Cys-tRNA(Pro) is not edited by ProRS. This chain is Proline--tRNA ligase, found in Desulforamulus reducens (strain ATCC BAA-1160 / DSM 100696 / MI-1) (Desulfotomaculum reducens).